We begin with the raw amino-acid sequence, 125 residues long: Small ribosomal subunit protein uS13 (125 aa).

The segment at 92–125 (RRSLPARGQRTRTNARTRKGKRKTVAGKKKAGKK) is disordered.

The protein belongs to the universal ribosomal protein uS13 family. In terms of assembly, part of the 30S ribosomal subunit. Forms a loose heterodimer with protein S19. Forms two bridges to the 50S subunit in the 70S ribosome.

In terms of biological role, located at the top of the head of the 30S subunit, it contacts several helices of the 16S rRNA. In the 70S ribosome it contacts the 23S rRNA (bridge B1a) and protein L5 of the 50S subunit (bridge B1b), connecting the 2 subunits; these bridges are implicated in subunit movement. Contacts the tRNAs in the A and P-sites. The sequence is that of Small ribosomal subunit protein uS13 from Chlorobaculum parvum (strain DSM 263 / NCIMB 8327) (Chlorobium vibrioforme subsp. thiosulfatophilum).